Reading from the N-terminus, the 73-residue chain is Cell division protein ZapB (73 aa).

Residues 3–67 (LELLSKLETK…WNDKVTGLVG (65 aa)) adopt a coiled-coil conformation.

Belongs to the ZapB family. Homodimer. The ends of the coiled-coil dimer bind to each other, forming polymers. Interacts with FtsZ.

The protein resides in the cytoplasm. In terms of biological role, non-essential, abundant cell division factor that is required for proper Z-ring formation. It is recruited early to the divisome by direct interaction with FtsZ, stimulating Z-ring assembly and thereby promoting cell division earlier in the cell cycle. Its recruitment to the Z-ring requires functional FtsA or ZipA. This chain is Cell division protein ZapB, found in Shewanella sp. (strain ANA-3).